We begin with the raw amino-acid sequence, 969 residues long: Aspartic protease 5 (969 aa).

The first 22 residues, 1–22 (MEAGAMGGSSFLSFSSGPSAET), serve as a signal peptide directing secretion. Residues 1–45 (MEAGAMGGSSFLSFSSGPSAETSPSSLSPPTSSSPSPSPQLVSDS) show a composition bias toward low complexity. Disordered regions lie at residues 1–65 (MEAG…SSRT), 79–104 (ENEA…AGHL), 128–149 (SSAT…RSSS), 173–193 (SSSS…SACG), and 311–382 (FLSL…DLPR). Residues 23 to 820 (SPSSLSPPTS…PEGLPLSPQQ (798 aa)) are Lumenal-facing. Positions 311-324 (FLSLSSSPRSLASD) are enriched in low complexity. Residues 335–355 (QSREQRGEREGERQRPDKGEE) show a composition bias toward basic and acidic residues. One can recognise a Peptidase A1 domain in the interval 413-758 (YFLDILVGTP…DREQDRVGFA (346 aa)). The active site involves Asp-431. The disordered stretch occupies residues 608–635 (PPESESTPATEALRPVAGESASRRISEK). Asp-682 is a catalytic residue. The segment at 768–794 (DQRPRGPDSGDGPKGRPTAPFTVPPLR) is disordered. Over residues 769–781 (QRPRGPDSGDGPK) the composition is skewed to basic and acidic residues. A helical transmembrane segment spans residues 821-841 (LWVAAALVVVAILIAVTVILL). The Cytoplasmic segment spans residues 842-969 (HTIKRPSRSS…TLLDLPLGGE (128 aa)). Residues 922–969 (EDDGDFFGDDSVPSAEEQETAPSLSLREESSPFSASQSTLLDLPLGGE) are disordered. Polar residues predominate over residues 952-961 (SPFSASQSTL).

It belongs to the peptidase A1 family. In terms of processing, may be auto-cleaved to produce a 55 kDa form.

The protein localises to the golgi apparatus membrane. Functionally, in tachyzoites, plays an essential role in the export of several dense granule proteins into the host cell by cleaving the localization motif RRLxx (termed Toxoplasma export element (TEXEL)) located downstream of the N-terminal secretory signal sequence. However, can also regulate the export of proteins that lack the TEXEL motif, such as GRA24. Requires Arg at P3 and P2, and Leu at P1 in the substrate TEXEL motif and, specifically, cleaves after Leu. Cleaves GRA16; proteolytic cleavage is essential for the correct trafficking of GRA16 from the parasite into the infected host nucleus. Cleaves GRA19 and GRA20. Cleaves MYR1. Cleaves LCAT, GRA44, GRA46, GRA46, ROP35/WNG1 and ROP34/WNG2. By regulating the export of dense granule proteins into the host cell, regulates multiple processes during tachyzoite infection of host cells, including recruitment of host mitochondria to the parasitophorous vacuole (PV), formation of the nanotubular network (NTN) or intravacuolar network (IVN) which are membranous tubules that bud from the PV membrane into the vacuolar lumen and, up-regulation of host cell genes to facilitate the parasite infection and modulate the host innate immune response. At the bradyzoite stage, also involved in the formation of the cyst wall. The sequence is that of Aspartic protease 5 from Toxoplasma gondii.